A 520-amino-acid chain; its full sequence is GMP synthase [glutamine-hydrolyzing] (520 aa).

Residues 12-205 (KIIVLDYGSQ…AVNICGARGD (194 aa)) form the Glutamine amidotransferase type-1 domain. Cys89 serves as the catalytic Nucleophile. Catalysis depends on residues His179 and Glu181. A GMPS ATP-PPase domain is found at 206–395 (WSMDNFIDME…LGMPDEVVWR (190 aa)). Residue 233-239 (SGGVDSS) coordinates ATP.

As to quaternary structure, homodimer.

The catalysed reaction is XMP + L-glutamine + ATP + H2O = GMP + L-glutamate + AMP + diphosphate + 2 H(+). The protein operates within purine metabolism; GMP biosynthesis; GMP from XMP (L-Gln route): step 1/1. Functionally, catalyzes the synthesis of GMP from XMP. In Streptococcus agalactiae serotype III (strain NEM316), this protein is GMP synthase [glutamine-hydrolyzing].